Here is a 219-residue protein sequence, read N- to C-terminus: 7-methyl-GTP pyrophosphatase (219 aa).

The active-site Proton acceptor is the aspartate 89.

Belongs to the Maf family. YceF subfamily. It depends on a divalent metal cation as a cofactor.

It localises to the cytoplasm. The enzyme catalyses N(7)-methyl-GTP + H2O = N(7)-methyl-GMP + diphosphate + H(+). In terms of biological role, nucleoside triphosphate pyrophosphatase that hydrolyzes 7-methyl-GTP (m(7)GTP). May have a dual role in cell division arrest and in preventing the incorporation of modified nucleotides into cellular nucleic acids. The chain is 7-methyl-GTP pyrophosphatase from Polaromonas sp. (strain JS666 / ATCC BAA-500).